The sequence spans 373 residues: Putative C-P lyase subunit protein HtxH (373 aa).

It belongs to the PhnI family.

Functionally, belongs to an operon involved in hypophosphite oxidation. Exact function not known. In Stutzerimonas stutzeri (Pseudomonas stutzeri), this protein is Putative C-P lyase subunit protein HtxH (htxH).